Reading from the N-terminus, the 197-residue chain is Protein GrpE (197 aa).

Residues 1-39 (MSSKEQKTPEGQAPEEIIMDQHEEIEAVEPEASAEQVDP) are disordered.

This sequence belongs to the GrpE family. Homodimer.

The protein localises to the cytoplasm. Participates actively in the response to hyperosmotic and heat shock by preventing the aggregation of stress-denatured proteins, in association with DnaK and GrpE. It is the nucleotide exchange factor for DnaK and may function as a thermosensor. Unfolded proteins bind initially to DnaJ; upon interaction with the DnaJ-bound protein, DnaK hydrolyzes its bound ATP, resulting in the formation of a stable complex. GrpE releases ADP from DnaK; ATP binding to DnaK triggers the release of the substrate protein, thus completing the reaction cycle. Several rounds of ATP-dependent interactions between DnaJ, DnaK and GrpE are required for fully efficient folding. The polypeptide is Protein GrpE (Escherichia coli O127:H6 (strain E2348/69 / EPEC)).